The following is a 654-amino-acid chain: MAVSVSKQYMTSLVVILLFISLSSLSPTSTSHSCDPVEEEEEASSFGYVCHSNLQKCHTFAILRAKPPFYSLSDLSRHLGLDADDEYVPKGQLLLIPIECRCNGSIYEASLIKNCVKGDTFRSVSQSLQGLTTCLSIREKNPHISEDKLGDNIKLRLAIRCSCPQEGVSNASFLVTYPVGVRDSVSSLAVRFNTTEDAIVSANNKSGVVPLKPALIPLDHKPEKQGSRKRNPSKKKRSKMKLMIAVSSAIAGVCGLVTLMVFGYLHWKKETQIQTQTQKWISNKDPETRQLSLSIRTTSDKKISFEGSQDGSILDSHNTVGTTTPRKPVLEIYAFEELEKATENFSSSNHIKGSVYFGSLKGKDLAIKQVNADEMKRFDFGLLNDQSHYYNHNVIRVLGTCFREIDQDSYLVFEYARNGSLWDWIQNKLAIKNQFIESCYCFLAWKQRIKICHDVAIALKYMHRINYVHGNIKSRNIFLNEDLRGKVGNFGMSKCVTNELATEENLIESSLSPASDIFAYGIIVMEVLSGQTPDMLLGLQEVETTSLGTQETFVSEWSRLRRLLGDKEKLREVMDSTLGESYSVDSAFEIASIARDCTAEEAESRPSAVEIAERVSRLVDDDEDEEDEAVIDRESTLISESSYKPLVKKSSIID.

A signal peptide spans 1–25 (MAVSVSKQYMTSLVVILLFISLSSL). Residues 26–241 (SPTSTSHSCD…PSKKKRSKMK (216 aa)) lie on the Extracellular side of the membrane. Disulfide bonds link cysteine 50-cysteine 102, cysteine 57-cysteine 163, and cysteine 100-cysteine 161. Asparagine 103, asparagine 170, asparagine 193, and asparagine 204 each carry an N-linked (GlcNAc...) asparagine glycan. Residues 177 to 217 (YPVGVRDSVSSLAVRFNTTEDAIVSANNKSGVVPLKPALIP) form a LysM; degenerate repeat. The tract at residues 218–238 (LDHKPEKQGSRKRNPSKKKRS) is disordered. The span at 227–238 (SRKRNPSKKKRS) shows a compositional bias: basic residues. Residues 242–262 (LMIAVSSAIAGVCGLVTLMVF) form a helical membrane-spanning segment. The Cytoplasmic portion of the chain corresponds to 263 to 654 (GYLHWKKETQ…PLVKKSSIID (392 aa)). The Protein kinase domain occupies 324-619 (TPRKPVLEIY…EIAERVSRLV (296 aa)). Residues 330–338 (LEIYAFEEL) and lysine 368 each bind ATP.

The protein belongs to the protein kinase superfamily. Ser/Thr protein kinase family.

The protein localises to the cell membrane. In terms of biological role, may recognize microbe-derived N-acetylglucosamine (NAG)-containing ligands. This is Protein LYK2 (LYK2) from Arabidopsis thaliana (Mouse-ear cress).